Consider the following 116-residue polypeptide: Holo-[acyl-carrier-protein] synthase (116 aa).

2 residues coordinate Mg(2+): aspartate 8 and glutamate 50.

The protein belongs to the P-Pant transferase superfamily. AcpS family. The cofactor is Mg(2+).

It localises to the cytoplasm. The enzyme catalyses apo-[ACP] + CoA = holo-[ACP] + adenosine 3',5'-bisphosphate + H(+). Functionally, transfers the 4'-phosphopantetheine moiety from coenzyme A to a Ser of acyl-carrier-protein. The chain is Holo-[acyl-carrier-protein] synthase from Beutenbergia cavernae (strain ATCC BAA-8 / DSM 12333 / CCUG 43141 / JCM 11478 / NBRC 16432 / NCIMB 13614 / HKI 0122).